Consider the following 393-residue polypeptide: Prokineticin receptor 1 (393 aa).

At 1 to 62 (METTMGFMDD…TNSRTFFAAK (62 aa)) the chain is on the extracellular side. Residues Asn11, Asn14, and Asn36 are each glycosylated (N-linked (GlcNAc...) asparagine). A helical transmembrane segment spans residues 63–83 (IVIGMALVGIMLVCGIGNFIF). The Cytoplasmic portion of the chain corresponds to 84–98 (IAALVRYKKLRNLTN). The chain crosses the membrane as a helical span at residues 99 to 119 (LLIANLAISDFLVAIVCCPFE). At 120 to 146 (MDYYVVRQLSWEHGHVLCTSVNYLRTV) the chain is on the extracellular side. A disulfide bridge links Cys137 with Cys217. The helical transmembrane segment at 147-167 (SLYVSTNALLAIAIDRYLAIV) threads the bilayer. Topologically, residues 168–180 (HPLRPRMKCQTAT) are cytoplasmic. A helical transmembrane segment spans residues 181–201 (GLIALVWTVSILIAIPSAYFT). Over 202–232 (TETVLVIVKSQEKIFCGQIWPVDQQLYYKSY) the chain is Extracellular. A helical transmembrane segment spans residues 233 to 253 (FLFIFGIEFVGPVVTMTLCYA). Over 254-282 (RISRELWFKAVPGFQTEQIRKRLRCRRKT) the chain is Cytoplasmic. The helical transmembrane segment at 283–303 (VLVLMCILTAYVLCWAPFYGF) threads the bilayer. Over 304-322 (TIVRDFFPTVFVKEKHYLT) the chain is Extracellular. A helical membrane pass occupies residues 323–343 (AFYIVECIAMSNSMINTLCFV). Residues 344 to 393 (TVKNDTVKYFKKIMLLHWKASYNGGKSSADLDLKTIGMPATEEVDCIRLK) lie on the Cytoplasmic side of the membrane.

It belongs to the G-protein coupled receptor 1 family. In terms of tissue distribution, localizes to glandular epithelium, stroma and vascular endothelial cells of first trimester decidua (at protein level). Up-regulated in first trimester decidua when compared with non-pregnant endometrium. Expressed in the stomach, throughout the small intestine, colon, rectum, thyroid gland, pituitary gland, salivary gland, adrenal gland, testis, ovary, brain, spleen, prostate and pancreas.

It is found in the cell membrane. In terms of biological role, receptor for prokineticin 1. Exclusively coupled to the G(q) subclass of heteromeric G proteins. Activation leads to mobilization of calcium, stimulation of phosphoinositide turnover and activation of p44/p42 mitogen-activated protein kinase. May play a role during early pregnancy. This is Prokineticin receptor 1 (PROKR1) from Homo sapiens (Human).